Here is a 340-residue protein sequence, read N- to C-terminus: MKEVIQDKLGRPIRDLRISVTDRCNFRCDYCMPKEIFGDDYTFLPKNELLTFEELTRISKIYAQLGVKKIRITGGEPLLRRNLYKLVEQLNLIDGIEDIGLTTNGLLLKKHGKNLYQAGLRRINVSLDAIEDNVFQEINNRNIKASTILEQIDYAVSIGFEVKVNVVIQKGVNDNQIIPMIDYFKNKNIEVRFIEFMDVGNDNGWNFNKVVTKEEMLNMIEQHFEISPVAPKYYGEVAKYFRHKDSDAQFGLITSVSESFCSTCTRARLSSDGKFYGCLFASSEGFDVKALIRNGATDDDLKAQFKRLWSIRNDQYSDKRTMQTIENNRKKKINMNYIGG.

The Radical SAM core domain maps to 8–229; sequence KLGRPIRDLR…IEQHFEISPV (222 aa). Arg17 is a binding site for GTP. Cys24 and Cys28 together coordinate [4Fe-4S] cluster. Residue Tyr30 coordinates S-adenosyl-L-methionine. Cys31 provides a ligand contact to [4Fe-4S] cluster. Residue Arg71 participates in GTP binding. An S-adenosyl-L-methionine-binding site is contributed by Gly75. Residue Thr102 participates in GTP binding. Ser126 contributes to the S-adenosyl-L-methionine binding site. Lys163 contacts GTP. Met197 is an S-adenosyl-L-methionine binding site. [4Fe-4S] cluster is bound by residues Cys261 and Cys264. 266 to 268 contributes to the GTP binding site; that stretch reads RAR. [4Fe-4S] cluster is bound at residue Cys278.

It belongs to the radical SAM superfamily. MoaA family. Monomer and homodimer. [4Fe-4S] cluster is required as a cofactor.

The enzyme catalyses GTP + AH2 + S-adenosyl-L-methionine = (8S)-3',8-cyclo-7,8-dihydroguanosine 5'-triphosphate + 5'-deoxyadenosine + L-methionine + A + H(+). It functions in the pathway cofactor biosynthesis; molybdopterin biosynthesis. Functionally, catalyzes the cyclization of GTP to (8S)-3',8-cyclo-7,8-dihydroguanosine 5'-triphosphate. The chain is GTP 3',8-cyclase from Staphylococcus epidermidis (strain ATCC 35984 / DSM 28319 / BCRC 17069 / CCUG 31568 / BM 3577 / RP62A).